Here is a 243-residue protein sequence, read N- to C-terminus: Probable transcriptional regulator ycf27 (243 aa).

A Response regulatory domain is found at 7–120; it reads KILVVDDEAS…ELEARIRSVL (114 aa). The residue at position 56 (Asp56) is a 4-aspartylphosphate. Residues 76-94 constitute a DNA-binding region (H-T-H motif); the sequence is DVPIIMLTALGEVCDRITG. Residues 135–236 constitute a DNA-binding region (ompR/PhoB-type); sequence SGIISIGFLK…ARGTGYLFQR (102 aa).

The protein resides in the plastid. Its subcellular location is the chloroplast. In terms of biological role, probable promoter-specific protein mediating the interaction between DNA and RNA polymerase. This Porphyra purpurea (Red seaweed) protein is Probable transcriptional regulator ycf27 (ycf27).